A 678-amino-acid polypeptide reads, in one-letter code: Dol-P-Man:Man(7)GlcNAc(2)-PP-Dol alpha-1,6-mannosyltransferase (678 aa).

A run of 11 helical transmembrane segments spans residues 1–21, 56–76, 81–101, 109–129, 133–153, 168–188, 200–220, 252–272, 279–299, 301–321, and 334–354; these read MDIL…FTKV, FIGP…FETL, FWAQ…AWNS, IYGV…FHFM, TRPL…AYWL, ILVF…VSLL, VALP…SFFW, FYSA…IGVA, PLVL…HKEL, FIIY…QRIW, and ALAC…LLVI.

Belongs to the glycosyltransferase 22 family.

It is found in the endoplasmic reticulum membrane. It carries out the reaction an alpha-D-Man-(1-&gt;2)-alpha-D-Man-(1-&gt;2)-alpha-D-Man-(1-&gt;3)-[alpha-D-Man-(1-&gt;2)-alpha-D-Man-(1-&gt;3)-alpha-D-Man-(1-&gt;6)]-beta-D-Man-(1-&gt;4)-beta-D-GlcNAc-(1-&gt;4)-alpha-D-GlcNAc-diphospho-di-trans,poly-cis-dolichol + a di-trans,poly-cis-dolichyl beta-D-mannosyl phosphate = an alpha-D-Man-(1-&gt;2)-alpha-D-Man-(1-&gt;2)-alpha-D-Man-(1-&gt;3)-[alpha-D-Man-(1-&gt;2)-alpha-D-Man-(1-&gt;3)-[alpha-D-Man-(1-&gt;6)]-alpha-D-Man-(1-&gt;6)]-beta-D-Man-(1-&gt;4)-beta-D-GlcNAc-(1-&gt;4)-alpha-D-GlcNAc-diphospho-di-trans,poly-cis-dolichol + a di-trans,poly-cis-dolichyl phosphate + H(+). The protein operates within protein modification; protein glycosylation. In terms of biological role, mannosyltransferase that operates in the biosynthetic pathway of dolichol-linked oligosaccharides, the glycan precursors employed in protein asparagine (N)-glycosylation. The assembly of dolichol-linked oligosaccharides begins on the cytosolic side of the endoplasmic reticulum membrane and finishes in its lumen. The sequential addition of sugars to dolichol pyrophosphate produces dolichol-linked oligosaccharides containing fourteen sugars, including two GlcNAcs, nine mannoses and three glucoses. Once assembled, the oligosaccharide is transferred from the lipid to nascent proteins by oligosaccharyltransferases. In the lumen of the endoplasmic reticulum, adds the eighth mannose residue in an alpha-1,6 linkage onto Man(7)GlcNAc(2)-PP-dolichol to produce Man(8)GlcNAc(2)-PP-dolichol. In Drosophila melanogaster (Fruit fly), this protein is Dol-P-Man:Man(7)GlcNAc(2)-PP-Dol alpha-1,6-mannosyltransferase.